Consider the following 499-residue polypeptide: Potassium channel subfamily K member 5 (499 aa).

Residues 1–7 (MVDRGPL) are Cytoplasmic-facing. A helical transmembrane segment spans residues 8-26 (LTSAIIFYLAIGAAIFEVL). Asparagine 77 carries N-linked (GlcNAc...) asparagine glycosylation. Residues 85-112 (WPNAMIFAATVITTIGYGNVAPKTPAGR) constitute an intramembrane region (pore-forming). Threonine 98, isoleucine 99, glycine 100, and tyrosine 101 together coordinate K(+). Positions 98-103 (TIGYGN) are selectivity filter 1. The helical transmembrane segment at 113–133 (LFCVFYGLFGVPLCLTWISAL) threads the bilayer. The Cytoplasmic segment spans residues 134 to 157 (GKFFGGRAKRLGQFLTKRGVSLRK). The chain crosses the membrane as a helical span at residues 158 to 180 (AQITCTVIFIVWGVLVHLVIPPF). The pore-forming intramembrane region spans 190–215 (YIEGLYYSFITISTIGFGDFVAGVNP). K(+) contacts are provided by threonine 203, isoleucine 204, glycine 205, and phenylalanine 206. The selectivity filter 2 stretch occupies residues 203-208 (TIGFGD). A helical membrane pass occupies residues 230-250 (WIYLGLAWLSLFVNWKVSMFV). The Cytoplasmic portion of the chain corresponds to 251–325 (EVHKAIKKRR…SGGGETGPGP (75 aa)). 3 disordered regions span residues 312-335 (AMKT…GGLP), 360-388 (QTLR…SPAP), and 428-499 (GLSD…PKGT). The segment covering 316–334 (SGGGETGPGPGLGPQGGGL) has biased composition (gly residues). Residues 370–382 (RSPDEEAVARAPE) show a composition bias toward basic and acidic residues. The residue at position 371 (serine 371) is a Phosphoserine. Positions 466 to 480 (SSSESTFTSTESELS) are enriched in low complexity.

The protein belongs to the two pore domain potassium channel (TC 1.A.1.8) family. As to quaternary structure, homodimer; disulfide-linked. Heterodimer with KCNK16 and KCNK17. As to expression, abundant expression in kidney, also detected in liver, placenta and small intestine. In the kidney, expression is restricted to the distal tubules and collecting ducts. Not expressed in proximal tubules or glomeruli. Expressed in pancreas, in both endocrine (alpha, beta, gamma, delta, and epsilon) and exocrine (acinar and ductal) cells.

It localises to the membrane. The enzyme catalyses K(+)(in) = K(+)(out). The channel conductance is stimulated by extracellular alkaline pH. Inhibited by quinine, quinidine and external acidification. Functionally, k(+) channel that conducts voltage-dependent outward rectifying currents upon membrane depolarization. Voltage sensing is coupled to K(+) electrochemical gradient in an 'ion flux gating' mode where outward but not inward ion flow opens the gate. Homo- and heterodimerizes to form functional channels with distinct regulatory and gating properties. The chain is Potassium channel subfamily K member 5 from Homo sapiens (Human).